Reading from the N-terminus, the 589-residue chain is Kelch-like protein 25 (589 aa).

The BTB domain occupies T46–E114. Residues C149–V250 form the BACK domain. Kelch repeat units follow at residues T296–C340, K341–N388, C389–L444, L446–S492, Q493–N538, and K539–K585.

As to quaternary structure, component of the BCR(KLHL25) E3 ubiquitin ligase complex, at least composed of CUL3, KLHL25 and RBX1.

It functions in the pathway protein modification; protein ubiquitination. Functionally, substrate-specific adapter of a BCR (BTB-CUL3-RBX1) E3 ubiquitin ligase complex involved in various processes, such as translation homeostasis and lipid synthesis. The BCR(KLHL25) ubiquitin ligase complex acts by mediating ubiquitination of hypophosphorylated EIF4EBP1 (4E-BP1): ubiquitination and subsequent degradation of hypophosphorylated EIF4EBP1 (4E-BP1) probably serves as a homeostatic mechanism to maintain translation and prevent eIF4E inhibition when eIF4E levels are low. The BCR(KLHL25) complex does not target EIF4EBP1 (4E-BP1) when it is hyperphosphorylated or associated with eIF4E. The BCR(KLHL25) complex also acts as a regulator of lipid synthesis by mediating ubiquitination and degradation of ACLY, thereby inhibiting lipid synthesis. BCR(KLHL25)-mediated degradation of ACLY promotes fatty acid oxidation and is required for differentiation of inducible regulatory T (iTreg) cells. The chain is Kelch-like protein 25 from Mus musculus (Mouse).